The primary structure comprises 496 residues: UDP-N-acetylmuramate--L-alanine ligase (496 aa).

122–128 lines the ATP pocket; the sequence is GTHGKTT.

Belongs to the MurCDEF family.

It localises to the cytoplasm. It catalyses the reaction UDP-N-acetyl-alpha-D-muramate + L-alanine + ATP = UDP-N-acetyl-alpha-D-muramoyl-L-alanine + ADP + phosphate + H(+). Its pathway is cell wall biogenesis; peptidoglycan biosynthesis. Its function is as follows. Cell wall formation. The protein is UDP-N-acetylmuramate--L-alanine ligase of Mycolicibacterium paratuberculosis (strain ATCC BAA-968 / K-10) (Mycobacterium paratuberculosis).